A 226-amino-acid chain; its full sequence is Matrix protein (226 aa).

The dynamin binding signature appears at 2–4; it reads KSL. The PPXY motif motif lies at 28–31; it reads PPSY. The PTAP/PSAP motif signature appears at 40-43; it reads PSAP.

This sequence belongs to the vesiculoviruses matrix protein family. In terms of assembly, homomultimer. Interacts with viral nucleocapsid; this interaction contributes to the virion assembly. Interacts with the viral envelope glycoprotein; this interaction contributes to the virion assembly. Interacts with host RAE1-NUP98 complex. Interacts with host NEDD4 and TSG101. Interacts with host dynamin. Interacts with host NDUFAF4; the interaction inhibits viral propagation and is independent of interferon activation. Interacts with host GTF2H5; the interaction may inhibit host transcription. In terms of processing, phosphorylated by host.

Its subcellular location is the virion. The protein localises to the host endomembrane system. The protein resides in the host nucleus membrane. It is found in the host nucleus. It localises to the host cytoplasm. Its function is as follows. Forms a double layer around the helical nucleocapsid, the inner matrix layer binding to the N helix and the outer matrix layer binding to the envelope glycoprotein. Plays a major role in assembly and budding of virion, by recruiting cellular partners of the ESCRT complexes that play a key role in releasing the budding particle from the host membrane. Condensates the ribonucleocapsid core during virus assembly. Inhibits the host mRNA nuclear export thereby inducing the shut off of cellular transcription and preventing the interferon signaling and the establishment of antiviral state in infected cells. This shutoff presumably inhibits interferon signaling and thus establishment of antiviral state in virus infected cells. Induces cell-rounding, cytoskeleton disorganization and apoptosis in infected cell. Inhibits host transcription, possibly through interaction with host DNA repair factor IIH/TFIIH GTF2H5 subunit. In Isfahan virus (ISFV), this protein is Matrix protein (M).